The chain runs to 157 residues: Isotocin-neurophysin IT 1 (157 aa).

Positions 1–20 (MFGTSVSALCLLFLLSVCTA) are cleaved as a signal peptide. The cysteines at positions 21 and 26 are disulfide-linked. The residue at position 29 (Gly-29) is a Glycine amide. Disulfide bonds link Cys-42/Cys-86, Cys-45/Cys-59, Cys-53/Cys-76, Cys-60/Cys-66, Cys-93/Cys-106, Cys-100/Cys-118, and Cys-107/Cys-112.

It belongs to the vasopressin/oxytocin family. Post-translationally, seven disulfide bonds are present in neurophysin.

It is found in the secreted. Its function is as follows. Isotocin causes contraction of smooth muscles. The sequence is that of Isotocin-neurophysin IT 1 from Oncorhynchus masou (Cherry salmon).